We begin with the raw amino-acid sequence, 305 residues long: MSWLTEYVRPKIRTLLGRRDVPDNLWVQCPACQQMIFARDLEKNQRVCTHCDHHMRGTALERLKWTLDEGYTRIELPKAPQDPLRFRDSKRYTDRLRDAREKTHLDDAIVVAHGTIEGQKAVVAAMAFEFMGGSMGAAVGEGIVAAAQLAVLQKAPFIIFTASGGARMQEAAISLMQMPRTTIATRMVKEAGLPFIVVLTDPTTGGVTASFAMLGDIQIAEPKALIGFAGARVIEDTTREKLPEGFQRAEFLLEHGIVDMVVRRADMRATLSRVIALLTEGVTLPKVESVASLTEAKQPARTADA.

One can recognise a CoA carboxyltransferase N-terminal domain in the interval 25 to 293 (LWVQCPACQQ…LPKVESVASL (269 aa)). 4 residues coordinate Zn(2+): cysteine 29, cysteine 32, cysteine 48, and cysteine 51. The segment at 29–51 (CPACQQMIFARDLEKNQRVCTHC) adopts a C4-type zinc-finger fold.

Belongs to the AccD/PCCB family. In terms of assembly, acetyl-CoA carboxylase is a heterohexamer composed of biotin carboxyl carrier protein (AccB), biotin carboxylase (AccC) and two subunits each of ACCase subunit alpha (AccA) and ACCase subunit beta (AccD). The cofactor is Zn(2+).

It localises to the cytoplasm. It catalyses the reaction N(6)-carboxybiotinyl-L-lysyl-[protein] + acetyl-CoA = N(6)-biotinyl-L-lysyl-[protein] + malonyl-CoA. It participates in lipid metabolism; malonyl-CoA biosynthesis; malonyl-CoA from acetyl-CoA: step 1/1. Component of the acetyl coenzyme A carboxylase (ACC) complex. Biotin carboxylase (BC) catalyzes the carboxylation of biotin on its carrier protein (BCCP) and then the CO(2) group is transferred by the transcarboxylase to acetyl-CoA to form malonyl-CoA. This chain is Acetyl-coenzyme A carboxylase carboxyl transferase subunit beta, found in Granulibacter bethesdensis (strain ATCC BAA-1260 / CGDNIH1).